The following is a 469-amino-acid chain: ATP-dependent protease ATPase subunit HslU (469 aa).

ATP is bound by residues Ile24, 66 to 71 (GVGKTE), Asp282, Glu347, and Arg419.

Belongs to the ClpX chaperone family. HslU subfamily. A double ring-shaped homohexamer of HslV is capped on each side by a ring-shaped HslU homohexamer. The assembly of the HslU/HslV complex is dependent on binding of ATP.

Its subcellular location is the cytoplasm. Functionally, ATPase subunit of a proteasome-like degradation complex; this subunit has chaperone activity. The binding of ATP and its subsequent hydrolysis by HslU are essential for unfolding of protein substrates subsequently hydrolyzed by HslV. HslU recognizes the N-terminal part of its protein substrates and unfolds these before they are guided to HslV for hydrolysis. The protein is ATP-dependent protease ATPase subunit HslU of Listeria monocytogenes serotype 4b (strain CLIP80459).